The sequence spans 305 residues: Aspartate carbamoyltransferase catalytic subunit (305 aa).

Residues R53 and T54 each contribute to the carbamoyl phosphate site. K82 provides a ligand contact to L-aspartate. 3 residues coordinate carbamoyl phosphate: R103, H131, and Q134. 2 residues coordinate L-aspartate: R164 and R226. L265 and P266 together coordinate carbamoyl phosphate.

Belongs to the aspartate/ornithine carbamoyltransferase superfamily. ATCase family. Heterooligomer of catalytic and regulatory chains.

The enzyme catalyses carbamoyl phosphate + L-aspartate = N-carbamoyl-L-aspartate + phosphate + H(+). It participates in pyrimidine metabolism; UMP biosynthesis via de novo pathway; (S)-dihydroorotate from bicarbonate: step 2/3. In terms of biological role, catalyzes the condensation of carbamoyl phosphate and aspartate to form carbamoyl aspartate and inorganic phosphate, the committed step in the de novo pyrimidine nucleotide biosynthesis pathway. This chain is Aspartate carbamoyltransferase catalytic subunit, found in Ignicoccus hospitalis (strain KIN4/I / DSM 18386 / JCM 14125).